A 138-amino-acid chain; its full sequence is Phospholipase A2 crotoxin basic chain CBa2 (138 aa).

Residues 1 to 16 form the signal peptide; it reads MRALWIVAVLLVGVEG. 7 disulfides stabilise this stretch: Cys-42–Cys-131, Cys-44–Cys-60, Cys-59–Cys-111, Cys-65–Cys-138, Cys-66–Cys-104, Cys-73–Cys-97, and Cys-91–Cys-102. Ca(2+) contacts are provided by Tyr-43, Gly-45, and Gly-47. His-63 is an active-site residue. Asp-64 serves as a coordination point for Ca(2+). Residue Asp-105 is part of the active site.

This sequence belongs to the phospholipase A2 family. Group II subfamily. D49 sub-subfamily. As to quaternary structure, heterodimer of one of the acidic (CA1, CA2, CA3 or CA4) and one of the basic (CBa1, CBa2, CBb, CBc or CBd) subunits; non-covalently linked. The acidic subunit is non-toxic, without enzymatic activity and comprises 3 peptides that are cross-linked by 5 disulfide bridges. The basic subunit is toxic, has phospholipase A2 activity and is composed of a single chain. Multiple variants of each subunit give different crotoxin complexes that can be subdivided into 2 classes: (1) those of high toxicity, low PLA2 activity (CBb, CBc and CBd linked with high affinity to any CA) and high stability (K(d)=4.5 nM) and (2) those of moderate toxicity, high PLA2 activity (CBa2 linked with low affinity to any CA) and low stability (K(d)=25 nM). Interacts with human NBD1 domain of CFTR. Ca(2+) serves as cofactor. Expressed by the venom gland.

It is found in the secreted. The catalysed reaction is a 1,2-diacyl-sn-glycero-3-phosphocholine + H2O = a 1-acyl-sn-glycero-3-phosphocholine + a fatty acid + H(+). Its function is as follows. Heterodimer CA-CB: Crotoxin is a potent presynaptic neurotoxin that possesses phospholipase A2 (PLA2) activity and exerts a lethal action by blocking neuromuscular transmission. It consists of a non-covalent association of a basic and weakly toxic PLA2 subunit (CBa2, CBb, CBc, or CBd), with a small acidic, non-enzymatic and non-toxic subunit (CA1, CA2, CA3 or CA4). The complex acts by binding to a specific 48-kDa protein (R48) receptor located on presynaptic membranes, forming a transient ternary complex CA-CB-R48, followed by dissociation of the CA-CB complex and release of the CA subunit. At equilibrium, only the CB subunits remain associated with the specific crotoxin receptor. In addition to neurotoxicity, crotoxin has been found to exert myotoxicity, nephrotoxicity, and cardiovascular toxicity. Moreover, anti-inflammatory, immunomodulatory, anti-tumor and analgesic effects of crotoxin have also been reported. In terms of biological role, monomer CBa2: The basic subunit of crotoxin is a snake venom phospholipase A2 (PLA2) that exhibits weak neurotoxicity (10-fold less than the heterodimer) and strong anticoagulant effects by binding to factor Xa (F10) and inhibiting the prothrombinase activity (IC(50) is 41 nM). In addition, it shows the same effects described for the heterodimer and binds the nucleotide-binding domain (NBD1) of CFTR chloride channels and increases the channel current. PLA2 catalyzes the calcium-dependent hydrolysis of the 2-acyl groups in 3-sn-phosphoglycerides. The sequence is that of Phospholipase A2 crotoxin basic chain CBa2 from Crotalus durissus terrificus (South American rattlesnake).